The primary structure comprises 348 residues: D-alanine--D-alanine ligase (348 aa).

The 203-residue stretch at 132 to 334 folds into the ATP-grasp domain; that stretch reads KRILEVAGVP…YSDIIKELVV (203 aa). An ATP-binding site is contributed by 162-217; that stretch reads LEKLTFPVFVKPANMGSSVGISKAENESELRSAIDLALKYDSRILIEQGVVAREIE. Residues Asp288, Glu301, and Asn303 each coordinate Mg(2+).

This sequence belongs to the D-alanine--D-alanine ligase family. Mg(2+) is required as a cofactor. Mn(2+) serves as cofactor.

It localises to the cytoplasm. The enzyme catalyses 2 D-alanine + ATP = D-alanyl-D-alanine + ADP + phosphate + H(+). The protein operates within cell wall biogenesis; peptidoglycan biosynthesis. Its function is as follows. Cell wall formation. The polypeptide is D-alanine--D-alanine ligase (Streptococcus thermophilus (strain CNRZ 1066)).